The chain runs to 582 residues: DNA mismatch repair protein MutL (582 aa).

The protein belongs to the DNA mismatch repair MutL/HexB family.

This protein is involved in the repair of mismatches in DNA. It is required for dam-dependent methyl-directed DNA mismatch repair. May act as a 'molecular matchmaker', a protein that promotes the formation of a stable complex between two or more DNA-binding proteins in an ATP-dependent manner without itself being part of a final effector complex. This is DNA mismatch repair protein MutL from Chlamydia abortus (strain DSM 27085 / S26/3) (Chlamydophila abortus).